The primary structure comprises 316 residues: Malate dehydrogenase (316 aa).

Residues 12-17 and Asp36 each bind NAD(+); that span reads GAGNIG. Substrate contacts are provided by Arg85 and Arg91. NAD(+) contacts are provided by residues Asn98 and 121–123; that span reads VTN. Substrate-binding residues include Asn123 and Arg154. His178 functions as the Proton acceptor in the catalytic mechanism.

It belongs to the LDH/MDH superfamily. MDH type 3 family.

The catalysed reaction is (S)-malate + NAD(+) = oxaloacetate + NADH + H(+). In terms of biological role, catalyzes the reversible oxidation of malate to oxaloacetate. This is Malate dehydrogenase from Wolbachia pipientis wMel.